The chain runs to 264 residues: Indole-3-glycerol phosphate synthase (264 aa).

The protein belongs to the TrpC family.

The enzyme catalyses 1-(2-carboxyphenylamino)-1-deoxy-D-ribulose 5-phosphate + H(+) = (1S,2R)-1-C-(indol-3-yl)glycerol 3-phosphate + CO2 + H2O. It functions in the pathway amino-acid biosynthesis; L-tryptophan biosynthesis; L-tryptophan from chorismate: step 4/5. The protein is Indole-3-glycerol phosphate synthase of Azoarcus sp. (strain BH72).